The chain runs to 404 residues: Serine/threonine transporter SstT (404 aa).

A run of 8 helical transmembrane segments spans residues 17–37 (IGIGVVIGVMLGILAPDLTGF), 39–59 (ILGKLFVGGLKAIAPLLVFAL), 75–95 (MTLIIVLYLFGTFASALVAVL), 138–158 (ALATANYIGVLSWAIIFGLAL), 179–199 (IVVWIINLAPIGIMSLVFTTI), 212–232 (FLILVLVGTMVFVALVVNPLI), 287–307 (IPLGATINMGGAAITINVLTL), and 313–333 (FGIPIDFLTALLLSVVAAVSA).

The protein belongs to the dicarboxylate/amino acid:cation symporter (DAACS) (TC 2.A.23) family.

The protein resides in the cell membrane. It carries out the reaction L-serine(in) + Na(+)(in) = L-serine(out) + Na(+)(out). It catalyses the reaction L-threonine(in) + Na(+)(in) = L-threonine(out) + Na(+)(out). In terms of biological role, involved in the import of serine and threonine into the cell, with the concomitant import of sodium (symport system). The chain is Serine/threonine transporter SstT from Streptococcus pyogenes serotype M12 (strain MGAS2096).